Here is a 553-residue protein sequence, read N- to C-terminus: Urocanate hydratase (553 aa).

Residues 45 to 46 (GG), Gln123, 169 to 171 (GMG), Asp189, Arg194, 235 to 236 (NA), 256 to 260 (QTSAH), 266 to 267 (YV), Tyr315, and Gly485 contribute to the NAD(+) site.

Belongs to the urocanase family. Requires NAD(+) as cofactor.

The protein localises to the cytoplasm. The catalysed reaction is 4-imidazolone-5-propanoate = trans-urocanate + H2O. The protein operates within amino-acid degradation; L-histidine degradation into L-glutamate; N-formimidoyl-L-glutamate from L-histidine: step 2/3. In terms of biological role, catalyzes the conversion of urocanate to 4-imidazolone-5-propionate. The sequence is that of Urocanate hydratase from Staphylococcus aureus (strain MRSA252).